A 741-amino-acid polypeptide reads, in one-letter code: MDVVSTDVNNVLPDEIMETGISLVDDDSIEAITISSPMVDEAPMETELERIVEVSSSGECVSTAVVKEAVASTSNNAGHLAVVSVASKPESGPSAAAMKTVLQTHFHKLATPISGQVVLNKVSQASDLTAGSHVVKQEGQKLIVTTLGKSSHPIVLTLPQSHIGNAQTPVTHVQRIESKVTPQQIKLVTIGGNRSDGNPVLGMSALTSAQIISPSTKSPVLQTQQIKTLQIAKKAPTSSGPVITKLIIAKPLNSKPLTEQTTQIASSFAGGPALSQTNPGTPPKALNIADIGVIGTPSAKTTNKIAISPLKSPSKGVKSSVGGINTPQFKTIIPLAAAPNVQQIQVPGSKFHYVRLVTASTASNTTPSSQIQSTSTQPLQQAKPVVVNATPVRMSVPIIPAQTVKQVVPKPLNAASQIVTTSQPQQRLLMPATPLAQIQPSLTNLPAGTVLASAPGTGNVGYAVLPAQYVTQLQQSSYVSIASNAGLSGTTAAQNQPRGPLNGIISSESASRPRKPCNCTKSLCLKLYCDCFANGEFCNNCNCTNCYNNLEHENERQKAIKACLDRNPEAFKPKIGKGKEGESDRRHSKGCNCKRSGCLKNYCECYEAKIMCSSICKCIGCKNFEESPERKTLMHLADAAEVRVQQQTAAKTKLSSQISDLLTRPAPPMNSGGGKLPFTFVTKEVAEATCECLLAQAEQAEKQLKSKAATERMILEEFGRCLMRVINSAGKAKTDPCPMSC.

Residues 513–626 form the CRC domain; sequence PRKPCNCTKS…KCIGCKNFEE (114 aa). Residues 515–528 are DNA-binding; the sequence is KPCNCTKSLCLKLY. Residues C517, C519, C524, C529, C531, C538, C541, C543, and C546 each coordinate Zn(2+). Residues 575–588 form a linker region; it reads IGKGKEGESDRRHS. Residues C591, C593, C598, C603, C605, C612, C616, C618, and C621 each contribute to the Zn(2+) site. The tract at residues 591 to 604 is DNA-binding; the sequence is CNCKRSGCLKNYCE.

Belongs to the lin-54 family. In terms of assembly, component of the DREAM complex.

It localises to the nucleus. In terms of biological role, component of the DREAM complex, a multiprotein complex that can both act as a transcription activator or repressor depending on the context. Specifically recognizes the consensus motif 5'-TTYRAA-3' in target DNA. This chain is Protein lin-54 homolog (lin54), found in Xenopus tropicalis (Western clawed frog).